A 350-amino-acid chain; its full sequence is Phenylalanine--tRNA ligase alpha subunit (350 aa).

Residue Glu259 coordinates Mg(2+).

The protein belongs to the class-II aminoacyl-tRNA synthetase family. Phe-tRNA synthetase alpha subunit type 1 subfamily. Tetramer of two alpha and two beta subunits. The cofactor is Mg(2+).

The protein localises to the cytoplasm. The catalysed reaction is tRNA(Phe) + L-phenylalanine + ATP = L-phenylalanyl-tRNA(Phe) + AMP + diphosphate + H(+). The chain is Phenylalanine--tRNA ligase alpha subunit (pheS) from Rickettsia prowazekii (strain Madrid E).